We begin with the raw amino-acid sequence, 106 residues long: UPF0145 protein Fphi_1781 (106 aa).

Belongs to the UPF0145 family.

This is UPF0145 protein Fphi_1781 from Francisella philomiragia subsp. philomiragia (strain ATCC 25017 / CCUG 19701 / FSC 153 / O#319-036).